A 193-amino-acid polypeptide reads, in one-letter code: MSGPPSAPQGALAAPRSPAVRRKGLQAPSWGSPGRPAAHSPWACGPPHWGPQRGPRNAAAARPGPRSRWHKRCAAACGACARPPGHQLQPPGAGAPQPGVACSYLGPRPQRTPCSAQSRPGWCAGPRRRHAPGTEPHVAPGRAPPPRAGASPGSRLLPGSPSLLLPAATWRTWGQESKVLRKILKAWDPFSLL.

Disordered stretches follow at residues 1 to 67 (MSGP…GPRS) and 110 to 160 (QRTP…LPGS). Composition is skewed to low complexity over residues 50–64 (GPQR…ARPG) and 148–160 (AGAS…LPGS).

This is an uncharacterized protein from Homo sapiens (Human).